Consider the following 241-residue polypeptide: tRNA (guanine-N(7)-)-methyltransferase (241 aa).

The segment covering 1 to 10 has biased composition (polar residues); that stretch reads MTESNETPNT. The interval 1-21 is disordered; sequence MTESNETPNTPEAGDESKHRR. Positions 71, 96, 123, and 146 each coordinate S-adenosyl-L-methionine. D146 is an active-site residue. Substrate contacts are provided by residues K150, D182, and 219–222; that span reads TKFE.

Belongs to the class I-like SAM-binding methyltransferase superfamily. TrmB family.

It catalyses the reaction guanosine(46) in tRNA + S-adenosyl-L-methionine = N(7)-methylguanosine(46) in tRNA + S-adenosyl-L-homocysteine. The protein operates within tRNA modification; N(7)-methylguanine-tRNA biosynthesis. Its function is as follows. Catalyzes the formation of N(7)-methylguanine at position 46 (m7G46) in tRNA. This Pseudomonas fluorescens (strain SBW25) protein is tRNA (guanine-N(7)-)-methyltransferase.